Here is a 489-residue protein sequence, read N- to C-terminus: 3-octaprenyl-4-hydroxybenzoate carboxy-lyase (489 aa).

Mn(2+) is bound at residue Asn-172. Residues 175 to 177 (IYR), 189 to 191 (RWL), and 194 to 195 (RG) contribute to the prenylated FMN site. Residue Glu-238 coordinates Mn(2+). Asp-287 (proton donor) is an active-site residue.

This sequence belongs to the UbiD family. As to quaternary structure, homohexamer. Requires prenylated FMN as cofactor. Mn(2+) serves as cofactor.

It is found in the cell membrane. The enzyme catalyses a 4-hydroxy-3-(all-trans-polyprenyl)benzoate + H(+) = a 2-(all-trans-polyprenyl)phenol + CO2. It participates in cofactor biosynthesis; ubiquinone biosynthesis. In terms of biological role, catalyzes the decarboxylation of 3-octaprenyl-4-hydroxy benzoate to 2-octaprenylphenol, an intermediate step in ubiquinone biosynthesis. In Aeromonas salmonicida (strain A449), this protein is 3-octaprenyl-4-hydroxybenzoate carboxy-lyase.